A 509-amino-acid chain; its full sequence is MSVSALSSTRFTGSISGFLQVASVLGLLLLLVKAVQFYLQRQWLLKAFQQFPSPPFHWFFGHKQFQGDKELQQIMTCVENFPSAFPRWFWGSKAYLIVYDPDYMKVILGRSDPKANGVYRLLAPWIGYGLLLLNGQPWFQHRRMLTPAFHYDILKPYVKNMADSIRLMLDKWEQLAGQDSSIEIFQHISLMTLDTVMKCAFSHNGSVQVDGNYKSYIQAIGNLNDLFHSRVRNIFHQNDTIYNFSSNGHLFNRACQLAHDHTDGVIKLRKDQLQNAGELEKVKKKRRLDFLDILLLARMENGDSLSDKDLRAEVDTFMFEGHDTTASGVSWIFYALATHPEHQQRCREEVQSVLGDGSSITWDHLDQIPYTTMCIKEALRLYPPVPGIVRELSTSVTFPDGRSLPKGIQVTLSIYGLHHNPKVWPNPEVFDPSRFAPDSPRHSHSFLPFSGGARNCIGKQFAMSEMKVIVALTLLRFELLPDPTKVPIPLPRLVLKSKNGIYLYLKKLH.

2 helical membrane-spanning segments follow: residues 11–31 (FTGS…LLLL) and 121–141 (LLAP…WFQH). Residue Glu-320 coordinates heme. Position 439 is a phosphoserine (Ser-439). Cys-456 serves as a coordination point for heme.

The protein belongs to the cytochrome P450 family. The cofactor is heme. Expressed in liver (at protein level) and kidney (at protein level).

Its subcellular location is the endoplasmic reticulum membrane. It is found in the microsome membrane. The enzyme catalyses an omega-methyl-long-chain fatty acid + reduced [NADPH--hemoprotein reductase] + O2 = an omega-hydroxy-long-chain fatty acid + oxidized [NADPH--hemoprotein reductase] + H2O + H(+). It carries out the reaction dodecanoate + reduced [NADPH--hemoprotein reductase] + O2 = 12-hydroxydodecanoate + oxidized [NADPH--hemoprotein reductase] + H2O + H(+). It catalyses the reaction dodecanoate + reduced [NADPH--hemoprotein reductase] + O2 = 11-hydroxydodecanoate + oxidized [NADPH--hemoprotein reductase] + H2O + H(+). The catalysed reaction is tetradecanoate + reduced [NADPH--hemoprotein reductase] + O2 = 14-hydroxytetradecanoate + oxidized [NADPH--hemoprotein reductase] + H2O + H(+). The enzyme catalyses hexadecanoate + reduced [NADPH--hemoprotein reductase] + O2 = 16-hydroxyhexadecanoate + oxidized [NADPH--hemoprotein reductase] + H2O + H(+). It carries out the reaction (9Z)-octadecenoate + reduced [NADPH--hemoprotein reductase] + O2 = 18-hydroxy-(9Z)-octadecenoate + oxidized [NADPH--hemoprotein reductase] + H2O + H(+). It catalyses the reaction (9Z,12Z)-octadecadienoate + reduced [NADPH--hemoprotein reductase] + O2 = 18-hydroxy-(9Z,12Z)-octadecadienoate + oxidized [NADPH--hemoprotein reductase] + H2O + H(+). The catalysed reaction is (9Z,12Z)-octadecadienoate + reduced [NADPH--hemoprotein reductase] + O2 = 17-hydroxy-(9Z,12Z)-octadecadienoate + oxidized [NADPH--hemoprotein reductase] + H2O + H(+). The enzyme catalyses (5Z,8Z,11Z,14Z)-eicosatetraenoate + reduced [NADPH--hemoprotein reductase] + O2 = 20-hydroxy-(5Z,8Z,11Z,14Z)-eicosatetraenoate + oxidized [NADPH--hemoprotein reductase] + H2O + H(+). It carries out the reaction 8,9-epoxy-(5Z,11Z,14Z)-eicosatrienoate + reduced [NADPH--hemoprotein reductase] + O2 = 20-hydroxy-8,9-epoxy-(5Z,11Z,14Z)-eicosatrienoate + oxidized [NADPH--hemoprotein reductase] + H2O + H(+). Functionally, a cytochrome P450 monooxygenase involved in the metabolism of fatty acids. Catalyzes predominantly the oxidation of the terminal carbon (omega-oxidation) of long-chain fatty acids. Acts as a major omega-hydroxylase for dodecanoic (lauric) acid in liver. In kidney, may play an important role in omega-hydroxylation of (5Z,8Z,11Z,14Z)-eicosatetraenoic acid (arachidonate) to 20-hydroxyeicosatetraenoic acid (20-HETE), a signaling molecule acting both as vasoconstrictive and natriuretic with overall effect on arterial blood pressure. Also participates in the formation of anti-inflammatory hydroxyepoxyeicosatrienoic acids (HEETs) in kidney by converting 8,9-epoxyeicosatrienoic acid (EET) to 20,8,9-HEET, an activator of PPARA. Displays substantially lower fatty acid omega-1 hydroxylase activity. Mechanistically, uses molecular oxygen inserting one oxygen atom into a substrate, and reducing the second into a water molecule, with two electrons provided by NADPH via cytochrome P450 reductase (CPR; NADPH-ferrihemoprotein reductase). This is Cytochrome P450 4A10 (Cyp4a10) from Rattus norvegicus (Rat).